The chain runs to 268 residues: Ribonuclease P protein subunit p30 (268 aa).

Alanine 2 is modified (N-acetylalanine). The disordered stretch occupies residues 247 to 268 (KPRPSEGDEDCLPASKKAKCEG). Serine 251 bears the Phosphoserine mark.

This sequence belongs to the eukaryotic/archaeal RNase P protein component 3 family. In terms of assembly, component of nuclear RNase P and RNase MRP ribonucleoproteins. RNase P consists of a catalytic RNA moiety and about 10 protein subunits; POP1, POP4, POP5, POP7, RPP14, RPP21, RPP25, RPP30, RPP38 and RPP40. Within the RNase P complex, POP1, POP7 and RPP25 form the 'finger' subcomplex, POP5, RPP14, RPP40 and homodimeric RPP30 form the 'palm' subcomplex, and RPP21, POP4 and RPP38 form the 'wrist' subcomplex. All subunits of the RNase P complex interact with the catalytic RNA. Several subunits of RNase P are also part of the RNase MRP complex. RNase MRP consists of a catalytic RNA moiety and about 8 protein subunits; POP1, POP7, RPP25, RPP30, RPP38, RPP40 and possibly also POP4 and POP5.

The protein localises to the nucleus. It is found in the nucleolus. Functionally, component of ribonuclease P, a ribonucleoprotein complex that generates mature tRNA molecules by cleaving their 5'-ends. Also a component of the MRP ribonuclease complex, which cleaves pre-rRNA sequences. This Homo sapiens (Human) protein is Ribonuclease P protein subunit p30 (RPP30).